The sequence spans 202 residues: uncharacterized protein (202 aa).

An START domain is found at Met1–Arg202.

May play a role in the interaction of the bacterium with animal cells. This is an uncharacterized protein from Pseudomonas aeruginosa (strain ATCC 15692 / DSM 22644 / CIP 104116 / JCM 14847 / LMG 12228 / 1C / PRS 101 / PAO1).